A 68-amino-acid chain; its full sequence is Large ribosomal subunit protein bL32 (68 aa).

Belongs to the bacterial ribosomal protein bL32 family.

The protein is Large ribosomal subunit protein bL32 of Cereibacter sphaeroides (strain ATCC 17025 / ATH 2.4.3) (Rhodobacter sphaeroides).